The following is a 213-amino-acid chain: Small ribosomal subunit protein uS5 (213 aa).

Residues 54-117 (LKSETVDVRL…RNAKLNIIPV (64 aa)) enclose the S5 DRBM domain.

The protein belongs to the universal ribosomal protein uS5 family. As to quaternary structure, part of the 30S ribosomal subunit. Contacts protein S4.

With S4 and S12 plays an important role in translational accuracy. The sequence is that of Small ribosomal subunit protein uS5 from Hyperthermus butylicus (strain DSM 5456 / JCM 9403 / PLM1-5).